A 103-amino-acid polypeptide reads, in one-letter code: Large ribosomal subunit protein uL23c (103 aa).

This sequence belongs to the universal ribosomal protein uL23 family. In terms of assembly, part of the 50S ribosomal subunit.

It is found in the plastid. It localises to the chloroplast. Its function is as follows. Binds to 23S rRNA. The polypeptide is Large ribosomal subunit protein uL23c (rpl23) (Gracilaria tenuistipitata var. liui (Red alga)).